We begin with the raw amino-acid sequence, 483 residues long: Pre-glycoprotein polyprotein GP complex (483 aa).

The N-myristoyl glycine; by host moiety is linked to residue G2. Residues 2 to 17 (GQLVSFIGEIPAIVHE) lie on the Extracellular side of the membrane. The helical transmembrane segment at 18 to 32 (ALNVALIAVSIIAIM) threads the bilayer. K33 is a topological domain (cytoplasmic). Residues 34–53 (GLINIWKSGLFQLIMFLILA) traverse the membrane as a helical segment. Extracellular-side segments run 54–58 (GRSCS) and 59–422 (ISIG…SLVD). C57 serves as a coordination point for Zn(2+). N-linked (GlcNAc...) asparagine; by host glycans are attached at residues N73, N88, N130, and N179. 5 disulfide bridges follow: C85-C223, C186-C204, C269-C282, C291-C300, and C354-C375. The N-linked (GlcNAc...) asparagine; by host glycan is linked to N216. 4 N-linked (GlcNAc...) asparagine; by host glycosylation sites follow: N355, N363, N380, and N385. A helical membrane pass occupies residues 423 to 443 (LCFWSTLFYTASIFLHLLHIP). At 444 to 483 (THRHIIGEGCPKPHRLTSDSLCACGFFQLKGRPTRWARIP) the chain is on the cytoplasmic side. Residues H445, H447, C453, H457, C465, and C467 each coordinate Zn(2+).

Belongs to the arenaviridae GPC protein family. Homotetramer; disulfide-linked. As to quaternary structure, homotetramer. GP2 homotetramers bind through ionic interactions with GP1 homotetramers to form the GP complex together with the stable signal peptide. The GP-C polyprotein interacts with the host protease MBTPS1/SKI-1 resulting in the polyprotein processing. Specific enzymatic cleavages in vivo yield mature proteins. GP-C polyprotein is cleaved in the endoplasmic reticulum by the host protease MBTPS1. Only cleaved glycoprotein is incorporated into virions. In terms of processing, the SSP remains stably associated with the GP complex following cleavage by signal peptidase and plays crucial roles in the trafficking of GP through the secretory pathway. Post-translationally, myristoylation is necessary for GP2-mediated fusion activity.

The protein localises to the virion membrane. Its subcellular location is the host endoplasmic reticulum membrane. It localises to the host Golgi apparatus membrane. The protein resides in the host cell membrane. Functionally, class I viral fusion protein that directs fusion of viral and host endosomal membranes, leading to delivery of the nucleocapsid into the cytoplasm. Membrane fusion is mediated by irreversible conformational changes induced upon acidification in the endosome. In terms of biological role, stable signal peptide (SSP): cleaved and functions as a signal peptide. In addition, it is also retained as the third component of the GP complex. The SSP is required for efficient glycoprotein expression, post-translational maturation cleavage of GP1 and GP2, glycoprotein transport to the cell surface plasma membrane, formation of infectious virus particles, and acid pH-dependent glycoprotein-mediated cell fusion. Interacts with the host receptor. The polypeptide is Pre-glycoprotein polyprotein GP complex (Peromyscus californicus (California mouse)).